Consider the following 82-residue polypeptide: Large ribosomal subunit protein bL27 (82 aa).

Positions 1-26 are disordered; that stretch reads MAHKKGQGASRNGRDSESKRLGMKVG.

The protein belongs to the bacterial ribosomal protein bL27 family.

In Chlamydia felis (strain Fe/C-56) (Chlamydophila felis), this protein is Large ribosomal subunit protein bL27.